Here is a 165-residue protein sequence, read N- to C-terminus: MRIDTSALCDIYSDQVDVVEPIFSSFGGVSSFYGKITTVKCFESNGLIASVLEEEGQGRVLLIDGGGAVRRALIDTELAQLALDNGWEGIIVYGAVRQLDVLETLDIGIHALAPIPVGADDNEIGEVDTPVNFGGVTFFPEDYVYADLTGIILSPELLDLAELEE.

This sequence belongs to the RraA family. In terms of assembly, homotrimer. Binds to both RNA-binding sites in the C-terminal region of Rne and to RhlB.

The protein localises to the cytoplasm. In terms of biological role, globally modulates RNA abundance by binding to RNase E (Rne) and regulating its endonucleolytic activity. Can modulate Rne action in a substrate-dependent manner by altering the composition of the degradosome. Modulates RNA-binding and helicase activities of the degradosome. The protein is Regulator of ribonuclease activity A of Actinobacillus pleuropneumoniae serotype 7 (strain AP76).